Here is a 161-residue protein sequence, read N- to C-terminus: Chorion class B protein L12 (161 aa).

The N-terminal stretch at 1–21 is a signal peptide; that stretch reads MAAKLILFVCATALVAQSVLS. Residues 22 to 52 form a left arm region; the sequence is IGCGCGGRGYGGLGYGGLGYGGLGGGCGRGF. Tandem repeats lie at residues 30–34, 35–39, and 40–44. The 3 X 5 AA tandem repeats of G-Y-G-G-L stretch occupies residues 30-44; that stretch reads GYGGLGYGGLGYGGL. A central domain region spans residues 53–121; the sequence is SGGGLPVATA…GNGAVGITRE (69 aa). Residues 122–161 are right arm (Gly-rich tandem repeats); it reads GGFGYGAGYGDGYGLGFGGYGGGYGLGNGGYGGCGCGWGY.

It belongs to the chorion protein family.

Functionally, this protein is one of many from the eggshell of the silk moth. The protein is Chorion class B protein L12 of Bombyx mori (Silk moth).